The following is a 163-amino-acid chain: Photosystem II extrinsic protein V (163 aa).

A signal peptide spans 1–26; the sequence is MFKKSSQLFSLVFFTIFSIFIGTASA. Heme c-binding residues include cysteine 63, cysteine 66, histidine 67, and methionine 130.

The protein belongs to the cytochrome c family. PsbV subfamily. As to quaternary structure, PSII is composed of 1 copy each of membrane proteins PsbA, PsbB, PsbC, PsbD, PsbE, PsbF, PsbH, PsbI, PsbJ, PsbK, PsbL, PsbM, PsbT, PsbY, PsbZ, Psb30/Ycf12, at least 3 peripheral proteins of the oxygen-evolving complex and a large number of cofactors. It forms dimeric complexes. Heme c serves as cofactor.

The protein resides in the plastid. It localises to the chloroplast thylakoid membrane. Its function is as follows. One of the extrinsic, lumenal subunits of photosystem II (PSII). PSII is a light-driven water plastoquinone oxidoreductase, using light energy to abstract electrons from H(2)O, generating a proton gradient subsequently used for ATP formation. The extrinsic proteins stabilize the structure of photosystem II oxygen-evolving complex (OEC), the ion environment of oxygen evolution and protect the OEC against heat-induced inactivation. This Phaeodactylum tricornutum (strain CCAP 1055/1) protein is Photosystem II extrinsic protein V.